The following is a 391-amino-acid chain: MAFAPSHTASPSYCGVAQGGRRSNGMSPVVAMASTINRVKTAKKPYTPPREVHLQVKHSLPPQKREIFDSLQPWAKENLLNLLKPVEKSWQPQDFLPDPSSDGFYDEVKELRERAKEIPDDYFVCLVGDMVTEEALPTYQTMLNTLDGVRDETGASPTTWAVWTRAWTAEENRHGDLLNKYMYLTGRVDMKQIEKTIQYLIGSGMDPGTENNPYLGFLYTSFQERATFISHGNTARHAKEYGDLKLAQICGTIAADEKRHETAYTKIVEKLFEIDPDYTVLAFADMMRKKISMPAHLMYDGKDDNLFEHFSAVAQRLGVYTARDYADILEFLVQRWKVADLTGLSGEGRRAQDFVCTLAPRIRRLDERAQARAKQAPVIPFSWVYDRKVQL.

Residues 1-20 (MAFAPSHTASPSYCGVAQGG) form a disordered region. A chloroplast-targeting transit peptide spans 1–32 (MAFAPSHTASPSYCGVAQGGRRSNGMSPVVAM). Fe cation-binding residues include Glu-133, Glu-171, His-174, Glu-224, Glu-257, and His-260.

It belongs to the fatty acid desaturase type 2 family. In terms of assembly, homodimer. The cofactor is Fe(2+).

Its subcellular location is the plastid. It is found in the chloroplast. It catalyses the reaction octadecanoyl-[ACP] + 2 reduced [2Fe-2S]-[ferredoxin] + O2 + 2 H(+) = (9Z)-octadecenoyl-[ACP] + 2 oxidized [2Fe-2S]-[ferredoxin] + 2 H2O. It participates in lipid metabolism; fatty acid metabolism. Converts stearoyl-ACP to oleoyl-ACP by introduction of a cis double bond between carbons 9 and 10 of the acyl chain. The sequence is that of Stearoyl-[acyl-carrier-protein] 9-desaturase 5, chloroplastic from Oryza sativa subsp. indica (Rice).